Consider the following 219-residue polypeptide: Asperlin biosynthesis cluster protein I (219 aa).

The interval 97-124 is disordered; sequence TGSSDNSPTATGIGAAGLTGDRPSSSGA. Residues 105–116 are compositionally biased toward low complexity; sequence TATGIGAAGLTG.

Its pathway is polyketide biosynthesis. Functionally, part of the gene cluster that mediates the biosynthesis of asperlin, a polyketide showing anti-inflammatory, antitumor and antibiotic activities. The first step of the asperlin biosynthesis is the production of the intermediate 2,4,6-octatrienoic acid by the highly redusing polyketide synthase alnA with cleavage of the PKS product by the esterase alnB. 2,4,6-octatrienoic acid is further converted to asperlin via several steps involving the remaining enzymes from the cluster. In Emericella nidulans (strain FGSC A4 / ATCC 38163 / CBS 112.46 / NRRL 194 / M139) (Aspergillus nidulans), this protein is Asperlin biosynthesis cluster protein I.